We begin with the raw amino-acid sequence, 385 residues long: MARENGESSSSWKKQAEDIKKIFEFKETLGTGAFSEVVLAEEKATGKLFAVKCIPKKALKGKESSIENEIAVLRKIKHENIVALEDIYESPNHLYLVMQLVSGGELFDRIVEKGFYTEKDASTLIRQVLDAVYYLHRMGIVHRDLKPENLLYYSQDEESKIMISDFGLSKMEGKGDVMSTACGTPGYVAPEVLAQKPYSKAVDCWSIGVIAYILLCGYPPFYDENDSKLFEQILKAEYEFDSPYWDDISDSAKDFIRNLMEKDPNKRYTCEQAARHPWIAGDTALNKNIHESVSAQIRKNFAKSKWRQAFNATAVVRHMRKLHLGSSLDSSNASVSSSLSLASQKDCLAPSTLCSFISSSSGVSGVGAERRPRPTTVTAVHSGSK.

One can recognise a Protein kinase domain in the interval 23–279 (FEFKETLGTG…CEQAARHPWI (257 aa)). ATP is bound by residues 29 to 37 (LGTGAFSEV) and Lys52. Lys113 is covalently cross-linked (Glycyl lysine isopeptide (Lys-Gly) (interchain with G-Cter in SUMO2)). Phosphoserine is present on Ser122. The active-site Proton acceptor is Asp144. A Phosphothreonine; by CaMKK1 and CaMKK2 modification is found at Thr180. Positions 279–319 (IAGDTALNKNIHESVSAQIRKNFAKSKWRQAFNATAVVRHM) are autoinhibitory domain. Positions 299–320 (KNFAKSKWRQAFNATAVVRHMR) are calmodulin-binding. The Nuclear export signal motif lies at 318–324 (HMRKLHL). A disordered region spans residues 360-385 (SSGVSGVGAERRPRPTTVTAVHSGSK). A compositionally biased stretch (polar residues) spans 375–385 (TTVTAVHSGSK).

This sequence belongs to the protein kinase superfamily. CAMK Ser/Thr protein kinase family. CaMK subfamily. Widely expressed. Highly and mostly expressed in polymorphonuclear leukocytes (neutrophilic and eosinophilic granulocytes) while little or no expression is observed in monocytes and lymphocytes.

The protein resides in the cytoplasm. The protein localises to the nucleus. It catalyses the reaction L-seryl-[protein] + ATP = O-phospho-L-seryl-[protein] + ADP + H(+). The catalysed reaction is L-threonyl-[protein] + ATP = O-phospho-L-threonyl-[protein] + ADP + H(+). Activated by Ca(2+)/calmodulin. Binding of calmodulin results in conformational change that relieves intrasteric autoinhibition and allows phosphorylation of Thr-180 within the activation loop by CaMKK1 or CaMKK2. Phosphorylation of Thr-180 results in several fold increase in total activity. Unlike CaMK4, may be unable to exhibit autonomous activity after Ca(2+)/calmodulin activation. Functionally, calcium/calmodulin-dependent protein kinase that operates in the calcium-triggered CaMKK-CaMK1 signaling cascade and, upon calcium influx, activates CREB-dependent gene transcription, regulates calcium-mediated granulocyte function and respiratory burst and promotes basal dendritic growth of hippocampal neurons. In neutrophil cells, required for cytokine-induced proliferative responses and activation of the respiratory burst. Activates the transcription factor CREB1 in hippocampal neuron nuclei. May play a role in apoptosis of erythroleukemia cells. In vitro, phosphorylates transcription factor CREM isoform Beta. The sequence is that of Calcium/calmodulin-dependent protein kinase type 1D (CAMK1D) from Homo sapiens (Human).